The sequence spans 1051 residues: Carbamoyl phosphate synthase large chain (1051 aa).

The carboxyphosphate synthetic domain stretch occupies residues 1–399 (MRETPKKVLV…SLQKAIRMLD (399 aa)). Residues arginine 127, arginine 167, glycine 173, glycine 174, lysine 206, leucine 208, glutamate 213, glycine 239, valine 240, histidine 241, glutamine 282, and glutamate 296 each coordinate ATP. The ATP-grasp 1 domain maps to 131–325 (RETMIENNLP…LAYVSAKLAL (195 aa)). 3 residues coordinate Mg(2+): glutamine 282, glutamate 296, and asparagine 298. 3 residues coordinate Mn(2+): glutamine 282, glutamate 296, and asparagine 298. An oligomerization domain region spans residues 400-548 (IGEPGVVGGK…LTYNGTEDDI (149 aa)). The interval 549-930 (EFSQGNKLLI…LKSWLSSMPN (382 aa)) is carbamoyl phosphate synthetic domain. The ATP-grasp 2 domain occupies 673–863 (SKLLDKLGIS…LINESMKAIF (191 aa)). ATP is bound by residues arginine 709, lysine 748, isoleucine 750, glutamate 755, glycine 779, valine 780, histidine 781, serine 782, glutamine 822, and glutamate 834. The Mg(2+) site is built by glutamine 822, glutamate 834, and asparagine 836. Residues glutamine 822, glutamate 834, and asparagine 836 each coordinate Mn(2+). Residues 930–1051 (NRIPNKNGIA…FEISEYGGGI (122 aa)) form the MGS-like domain. Positions 931-1051 (RIPNKNGIAL…FEISEYGGGI (121 aa)) are allosteric domain.

Belongs to the CarB family. Composed of two chains; the small (or glutamine) chain promotes the hydrolysis of glutamine to ammonia, which is used by the large (or ammonia) chain to synthesize carbamoyl phosphate. Tetramer of heterodimers (alpha,beta)4. The cofactor is Mg(2+). Mn(2+) is required as a cofactor.

It carries out the reaction hydrogencarbonate + L-glutamine + 2 ATP + H2O = carbamoyl phosphate + L-glutamate + 2 ADP + phosphate + 2 H(+). The catalysed reaction is hydrogencarbonate + NH4(+) + 2 ATP = carbamoyl phosphate + 2 ADP + phosphate + 2 H(+). The protein operates within amino-acid biosynthesis; L-arginine biosynthesis; carbamoyl phosphate from bicarbonate: step 1/1. It functions in the pathway pyrimidine metabolism; UMP biosynthesis via de novo pathway; (S)-dihydroorotate from bicarbonate: step 1/3. Functionally, large subunit of the glutamine-dependent carbamoyl phosphate synthetase (CPSase). CPSase catalyzes the formation of carbamoyl phosphate from the ammonia moiety of glutamine, carbonate, and phosphate donated by ATP, constituting the first step of 2 biosynthetic pathways, one leading to arginine and/or urea and the other to pyrimidine nucleotides. The large subunit (synthetase) binds the substrates ammonia (free or transferred from glutamine from the small subunit), hydrogencarbonate and ATP and carries out an ATP-coupled ligase reaction, activating hydrogencarbonate by forming carboxy phosphate which reacts with ammonia to form carbamoyl phosphate. The polypeptide is Carbamoyl phosphate synthase large chain (Saccharolobus solfataricus (strain ATCC 35092 / DSM 1617 / JCM 11322 / P2) (Sulfolobus solfataricus)).